Consider the following 163-residue polypeptide: Nucleotide-binding protein RHA1_ro01989 (163 aa).

The protein belongs to the YajQ family.

In terms of biological role, nucleotide-binding protein. The chain is Nucleotide-binding protein RHA1_ro01989 from Rhodococcus jostii (strain RHA1).